The primary structure comprises 791 residues: Splicing factor 3A subunit 1 (791 aa).

The tract at residues 1–41 (MQAGPVQAVPPPPPVATESKQPIEEEASSKEDPTPSKPVVG) is disordered. K20 participates in a covalent cross-link: Glycyl lysine isopeptide (Lys-Gly) (interchain with G-Cter in SUMO2). Over residues 21–34 (QPIEEEASSKEDPT) the composition is skewed to basic and acidic residues. Residues 52 to 94 (IVDKTASFVARNGPEFEARIRQNEINNPKFNFLNPNDPYHAYY) form an SURP motif 1 repeat. K55 is subject to N6-acetyllysine. A Glycyl lysine isopeptide (Lys-Gly) (interchain with G-Cter in SUMO2) cross-link involves residue K131. Residues 166–208 (VVKLTAQFVARNGRQFLTQLMQKEQRNYQFDFLRPQHSLFNYF) form an SURP motif 2 repeat. A disordered region spans residues 318–411 (GESEEVEMEV…APAPDEYLVS (94 aa)). Residues S320 and S329 each carry the phosphoserine modification. The span at 320–336 (SEEVEMEVESDEEDQEK) shows a compositional bias: acidic residues. The span at 340–351 (TPSQLDQDTQVQ) shows a compositional bias: polar residues. Positions 352–362 (DMDEGSDDEEE) are enriched in acidic residues. S357 is subject to Phosphoserine. The span at 366 to 382 (VPPPPETPMPPPLPPTP) shows a compositional bias: pro residues. A compositionally biased stretch (basic and acidic residues) spans 386 to 395 (IVRKDYDPKA). The residue at position 411 (S411) is a Phosphoserine. K422 participates in a covalent cross-link: Glycyl lysine isopeptide (Lys-Gly) (interchain with G-Cter in SUMO2). S449 is subject to Phosphoserine. A Phosphotyrosine modification is found at Y454. Residues 486-500 (IGEEEIQKPEEKVTW) are compositionally biased toward basic and acidic residues. 3 disordered regions span residues 486–516 (IGEE…AAQA), 528–582 (HKAK…AMPP), and 664–684 (PMPP…KKLK). K497 is covalently cross-linked (Glycyl lysine isopeptide (Lys-Gly) (interchain with G-Cter in SUMO2)). S506 is subject to Phosphoserine. A compositionally biased stretch (polar residues) spans 507–516 (MARTQQAAQA). K540 is covalently cross-linked (Glycyl lysine isopeptide (Lys-Gly) (interchain with G-Cter in SUMO2)). Residues 561-570 (ATNIPSSAPP) are compositionally biased toward polar residues. The segment covering 664–673 (PMPPVHPPPP) has biased composition (pro residues). The segment at 678-700 (PPSKKLKTEDSLMPEEEFLRRNK) is required and sufficient for nuclear import. K684 participates in a covalent cross-link: Glycyl lysine isopeptide (Lys-Gly) (interchain with G-Cter in SUMO2). Positions 705-788 (IKVQVPNMQD…IHLALKERGG (84 aa)) constitute a Ubiquitin-like domain. Y757 carries the phosphotyrosine modification.

As to quaternary structure, component of the 17S U2 SnRNP complex, a ribonucleoprotein complex that contains small nuclear RNA (snRNA) U2 and a number of specific proteins. Part of the SF3A subcomplex of the 17S U2 SnRNP complex which is composed of three subunits; SF3A3/SAP61, SF3A2/SAP62 and SF3A1/SAP114. SF3A associates with the splicing factor SF3B and a 12S RNA unit to form the mature 17S U2 small nuclear ribonucleoprotein complex (17S U2 snRNP). SF3A1 functions as a scaffold that interacts directly with both SF3A2 and SF3A3. Identified in the spliceosome 'E' complex, a precursor of the spliceosome 'A' complex. Identified in the spliceosome 'A' and 'B' complexes. Identified in the spliceosome 'C' complex. Interacts with P2RX6; resulting in a reduction of the splicing activity.

It is found in the nucleus. It localises to the nucleus speckle. Functionally, component of the 17S U2 SnRNP complex of the spliceosome, a large ribonucleoprotein complex that removes introns from transcribed pre-mRNAs. The 17S U2 SnRNP complex (1) directly participates in early spliceosome assembly and (2) mediates recognition of the intron branch site during pre-mRNA splicing by promoting the selection of the pre-mRNA branch-site adenosine, the nucleophile for the first step of splicing. Within the 17S U2 SnRNP complex, SF3A1 is part of the SF3A subcomplex that contributes to the assembly of the 17S U2 snRNP, and the subsequent assembly of the pre-spliceosome 'E' complex and the pre-catalytic spliceosome 'A' complex. Involved in pre-mRNA splicing as a component of pre-catalytic spliceosome 'B' complexes. The protein is Splicing factor 3A subunit 1 (Sf3a1) of Mus musculus (Mouse).